The primary structure comprises 189 residues: Chitin synthase 1 (189 aa).

It belongs to the chitin synthase family.

The protein resides in the cell membrane. It carries out the reaction [(1-&gt;4)-N-acetyl-beta-D-glucosaminyl](n) + UDP-N-acetyl-alpha-D-glucosamine = [(1-&gt;4)-N-acetyl-beta-D-glucosaminyl](n+1) + UDP + H(+). Functionally, polymerizes chitin, a structural polymer of the cell wall and septum, by transferring the sugar moiety of UDP-GlcNAc to the non-reducing end of the growing chitin polymer. The polypeptide is Chitin synthase 1 (CHS1) (Exophiala exophialae (Black yeast-like fungus)).